The following is a 278-amino-acid chain: Prohibitin-7, mitochondrial (278 aa).

The Mitochondrial matrix portion of the chain corresponds to 1-14 (MNVKKVPNVPGSPA). A helical; Signal-anchor for type II membrane protein membrane pass occupies residues 15 to 37 (LSALLKLGVIGGLGLYCIGSSMY). At 38–278 (NVDGGHRAIV…NSSDLLISKQ (241 aa)) the chain is on the mitochondrial intermembrane side. Positions 186-220 (KEFTEAIEKKQVAAQEAERAKFIVEKAEQDKKSAI) form a coiled coil.

This sequence belongs to the prohibitin family. Component of a prohibitin multimeric complex in mitochondrial membranes.

The protein localises to the mitochondrion inner membrane. In terms of biological role, prohibitin probably acts as a holdase/unfoldase for the stabilization of newly synthesized mitochondrial proteins. This is Prohibitin-7, mitochondrial (PHB7) from Arabidopsis thaliana (Mouse-ear cress).